A 69-amino-acid chain; its full sequence is Large ribosomal subunit protein bL28 (69 aa).

It belongs to the bacterial ribosomal protein bL28 family.

The sequence is that of Large ribosomal subunit protein bL28 from Lawsonia intracellularis (strain PHE/MN1-00).